An 894-amino-acid polypeptide reads, in one-letter code: Desmocollin-1 (894 aa).

The first 29 residues, 1–29, serve as a signal peptide directing secretion; sequence MALASAAPGSIFCKQLLFSLLVLTLLCDA. A propeptide spanning residues 30-134 is cleaved from the precursor; the sequence is CQKVYLRVPS…KDTALKRSKR (105 aa). 5 consecutive Cadherin domains span residues 135 to 242, 243 to 354, 355 to 471, 472 to 575, and 576 to 682; these read RWAP…APYF, EHRV…PPSF, TETS…GPEC, HPPV…DHAP, and QIDK…STRD. Residues 135-691 are Extracellular-facing; sequence RWAPIPASLM…DVRPNVILGR (557 aa). Residue Asn165 is glycosylated (N-linked (GlcNAc...) asparagine). Thr385 carries the post-translational modification Phosphothreonine. Asn546 is a glycosylation site (N-linked (GlcNAc...) asparagine). The helical transmembrane segment at 692–714 threads the bilayer; it reads WAILAMVLGSVLLLCILFTCFCV. Residues 715 to 894 are Cytoplasmic-facing; that stretch reads TAKRTVKKCF…RTLAKTCIKK (180 aa).

Binds to JUP/plakoglobin. Strongly expressed in epidermis, less in lymph node and tongue.

The protein resides in the cell membrane. The protein localises to the cell junction. It localises to the desmosome. Its function is as follows. A component of desmosome cell-cell junctions which are required for positive regulation of cellular adhesion. Required for desmosome adhesion strength between the granular layers of the epidermis, as a result moderates epidermal proliferation and differentiation. Is therefore required to maintain postnatal epidermal barrier function and normal hair follicle morphology into adulthood. This chain is Desmocollin-1 (DSC1), found in Homo sapiens (Human).